A 138-amino-acid polypeptide reads, in one-letter code: Mitochondrial import inner membrane translocase subunit tim-16 (138 aa).

Over residues 32–43 the composition is skewed to low complexity; the sequence is TQQAAARHAAAT. 2 disordered regions span residues 32–58 and 118–138; these read TQQA…NANA and LSRL…NSKE. Residues 44-56 show a composition bias toward polar residues; the sequence is GQSPSETKENANA. Residues 66–119 are J-like; it reads ESLQILNVKTPLNREDVEKHYEHLFAINDKAKGGTFYLQSKVYRAKERIDEELS.

This sequence belongs to the TIM16/PAM16 family. As to quaternary structure, probable component of the PAM complex at least composed of a mitochondrial HSP70 protein, GrpE, tim-44, tim-16 and tim-14. Associates with the TIM23 complex.

It is found in the mitochondrion inner membrane. Functionally, regulates ATP-dependent protein translocation into the mitochondrial matrix. The sequence is that of Mitochondrial import inner membrane translocase subunit tim-16 from Caenorhabditis briggsae.